A 430-amino-acid polypeptide reads, in one-letter code: Oleandomycin glycosyltransferase (430 aa).

The tract at residues 385–430 (GGTRRAADLIEAELPARHERQEPVGDRPNVGDRPAGVRSDRQRSAL) is disordered. The span at 386-409 (GTRRAADLIEAELPARHERQEPVG) shows a compositional bias: basic and acidic residues.

Belongs to the UDP-glycosyltransferase family.

Its function is as follows. Specifically inactivates oleandomycin via 2'-O-glycosylation using UDP-glucose. The chain is Oleandomycin glycosyltransferase (oleD) from Streptomyces antibioticus.